A 303-amino-acid polypeptide reads, in one-letter code: Mycothiol acetyltransferase (303 aa).

1D-myo-inositol 2-(L-cysteinylamino)-2-deoxy-alpha-D-glucopyranoside is bound at residue aspartate 33. Acetyl-CoA is bound by residues 78–80 (VVV) and 86–91 (RRGTGS). Residues 150 to 303 (VRFATYSGPH…AYAAVAPTDV (154 aa)) enclose the N-acetyltransferase domain. Positions 177, 218, and 226 each coordinate 1D-myo-inositol 2-(L-cysteinylamino)-2-deoxy-alpha-D-glucopyranoside. 230–232 (VGV) contributes to the acetyl-CoA binding site. Tyrosine 269 provides a ligand contact to 1D-myo-inositol 2-(L-cysteinylamino)-2-deoxy-alpha-D-glucopyranoside. 274 to 279 (NTAAVK) serves as a coordination point for acetyl-CoA.

This sequence belongs to the acetyltransferase family. MshD subfamily. As to quaternary structure, monomer.

The enzyme catalyses 1D-myo-inositol 2-(L-cysteinylamino)-2-deoxy-alpha-D-glucopyranoside + acetyl-CoA = mycothiol + CoA + H(+). Catalyzes the transfer of acetyl from acetyl-CoA to desacetylmycothiol (Cys-GlcN-Ins) to form mycothiol. This is Mycothiol acetyltransferase from Mycolicibacterium gilvum (strain PYR-GCK) (Mycobacterium gilvum (strain PYR-GCK)).